Here is a 400-residue protein sequence, read N- to C-terminus: Argininosuccinate synthase (400 aa).

8–16 (AYSGGLDTS) lines the ATP pocket. Residues tyrosine 87 and serine 92 each coordinate L-citrulline. Glycine 117 provides a ligand contact to ATP. L-aspartate contacts are provided by threonine 119, asparagine 123, and aspartate 124. Asparagine 123 is an L-citrulline binding site. The L-citrulline site is built by arginine 127, serine 175, glutamate 259, and tyrosine 271.

It belongs to the argininosuccinate synthase family. Type 1 subfamily. Homotetramer.

It is found in the cytoplasm. It carries out the reaction L-citrulline + L-aspartate + ATP = 2-(N(omega)-L-arginino)succinate + AMP + diphosphate + H(+). It functions in the pathway amino-acid biosynthesis; L-arginine biosynthesis; L-arginine from L-ornithine and carbamoyl phosphate: step 2/3. In Parafrankia sp. (strain EAN1pec), this protein is Argininosuccinate synthase.